A 147-amino-acid polypeptide reads, in one-letter code: Antiholin-like protein LrgA (147 aa).

4 consecutive transmembrane segments (helical) span residues 12-32, 35-55, 74-94, and 98-118; these read PAHFFHQVIVIALVLFVSKII, FMPIPMPASVIGLVLLFVLLC, NIGLLFVPAGISVVNSLGVIS, and FLIIGLIIVSTILLLICTGYV.

This sequence belongs to the CidA/LrgA family. LrgA subfamily.

The protein resides in the cell membrane. Inhibits the expression or activity of extracellular murein hydrolases by interacting, possibly with LrgB, with the holin-like proteins CidA and/or CidB. The LrgAB and CidAB proteins may affect the proton motive force of the membrane. May be involved in programmed cell death (PCD), possibly triggering PCD in response to antibiotics and environmental stresses. The protein is Antiholin-like protein LrgA of Staphylococcus aureus (strain USA300).